Reading from the N-terminus, the 438-residue chain is Glycogen synthase (438 aa).

ADP-alpha-D-glucose is bound at residue K16.

It belongs to the glycosyltransferase 1 family. Bacterial/plant glycogen synthase subfamily.

It catalyses the reaction [(1-&gt;4)-alpha-D-glucosyl](n) + ADP-alpha-D-glucose = [(1-&gt;4)-alpha-D-glucosyl](n+1) + ADP + H(+). The protein operates within glycan biosynthesis; glycogen biosynthesis. Its function is as follows. Synthesizes alpha-1,4-glucan chains using ADP-glucose. The chain is Glycogen synthase from Thermus caldophilus.